We begin with the raw amino-acid sequence, 338 residues long: H(2)-forming methylenetetrahydromethanopterin dehydrogenase-related protein MJ0715 (338 aa).

This sequence belongs to the HMD family.

The chain is H(2)-forming methylenetetrahydromethanopterin dehydrogenase-related protein MJ0715 from Methanocaldococcus jannaschii (strain ATCC 43067 / DSM 2661 / JAL-1 / JCM 10045 / NBRC 100440) (Methanococcus jannaschii).